Consider the following 340-residue polypeptide: Cathepsin S (340 aa).

The first 17 residues, 1–17 (MRAPGHAAIRWLFWMPL), serve as a signal peptide directing secretion. A propeptide spans 18-122 (VCSVAMEQLQ…VTFRSYSNRT (105 aa)) (activation peptide). Asn120 carries an N-linked (GlcNAc...) asparagine glycan. 4 disulfide bridges follow: Cys134-Cys233, Cys144-Cys189, Cys178-Cys222, and Cys281-Cys329. The active site involves Cys147. Residues His287 and Asn307 contribute to the active site.

Belongs to the peptidase C1 family. In terms of tissue distribution, widely expressed with highest expression found in non-skeletal tissues. Relatively high levels found in skeletal tissues. Expressed in spleen, B cells, dendritic cells and macrophages.

It is found in the lysosome. The protein resides in the secreted. The protein localises to the cytoplasmic vesicle. It localises to the phagosome. The enzyme catalyses Similar to cathepsin L, but with much less activity on Z-Phe-Arg-|-NHMec, and more activity on the Z-Val-Val-Arg-|-Xaa compound.. Its function is as follows. Thiol protease. Key protease responsible for the removal of the invariant chain from MHC class II molecules and MHC class II antigen presentation. The bond-specificity of this proteinase is in part similar to the specificities of cathepsin L. In Mus musculus (Mouse), this protein is Cathepsin S (Ctss).